Reading from the N-terminus, the 394-residue chain is Alpha-2B adrenergic receptor (394 aa).

A helical membrane pass occupies residues 1-25 (AIAAVITFLILFTIFGNALVILAVL). Residues 26–36 (TSRSLRAPQNL) lie on the Cytoplasmic side of the membrane. A helical membrane pass occupies residues 37–62 (FLVSLAAADILVATLIIPFSLANELL). The Extracellular segment spans residues 63-72 (GYWYFRRTWC). A disulfide bridge links cysteine 72 with cysteine 151. The helical transmembrane segment at 73–95 (EVYLALDVLFCTSSIVHLCAISL) threads the bilayer. Residues 96 to 117 (DRYWAVSRALEYNCKRTPRRIK) are Cytoplasmic-facing. A helical membrane pass occupies residues 118 to 140 (CIILTVWLIAAAISLPPLIYKGD). The Extracellular portion of the chain corresponds to 141-156 (QGPQPHGAPQCKLNQE). A helical transmembrane segment spans residues 157 to 180 (AWYILSSSLGSFFVPCLIMILVYL). Residues 181 to 358 (RIYLIAKRSH…LSREKRFTFV (178 aa)) are Cytoplasmic-facing. Positions 191–318 (RRGPRAKGGP…GSPPLQQPQG (128 aa)) are disordered. The segment covering 281 to 298 (LEEEAEEEEEEEEEEDEP) has biased composition (acidic residues). The span at 299 to 312 (QAVPVSPASVGSPP) shows a compositional bias: low complexity. Residues 359-382 (LAVVIGVFVLCWFPFFFSYSLSAI) traverse the membrane as a helical segment. Topologically, residues 383-391 (CPQQCRVPH) are extracellular. The chain crosses the membrane as a helical span at residues 392–394 (GLF).

The protein belongs to the G-protein coupled receptor 1 family. Adrenergic receptor subfamily. ADRA2B sub-subfamily. As to quaternary structure, interacts with RAB26. Interacts with PPP1R9B. Interacts with GGA1, GGA2 and GGA3.

The protein resides in the cell membrane. Alpha-2 adrenergic receptors mediate the catecholamine-induced inhibition of adenylate cyclase through the action of G proteins. This is Alpha-2B adrenergic receptor (ADRA2B) from Oryctolagus cuniculus (Rabbit).